Consider the following 74-residue polypeptide: Cecropin-P3 (74 aa).

The first 13 residues, 1-13 (MFLIYLLVQTAES), serve as a signal peptide directing secretion. Positions 45 to 74 (RRRSVGEEDAIPSHIEVNKFFLRKPAKEHI) are cleaved as a propeptide — removed in mature form.

This sequence belongs to the cecropin family. As to expression, expressed in the body wall, intestine, uterus and ovary.

It is found in the secreted. Has antibacterial activity against several Gram-positive and Gram-negative bacteria. Is weakly active against yeasts. Acts by a nonpore mechanism. The sequence is that of Cecropin-P3 (ASCEC-3) from Ascaris suum (Pig roundworm).